A 434-amino-acid polypeptide reads, in one-letter code: Perilipin-3 (434 aa).

A disordered region spans residues 1–22 (MSADGAEADGSTQVTVEEPVQQ). Residue Ser-2 is modified to N-acetylserine. Ser-31 carries the post-translational modification Phosphoserine. Position 65 is an N6-acetyllysine (Lys-65). The residue at position 91 (Ser-91) is a Phosphoserine. A Glycyl lysine isopeptide (Lys-Gly) (interchain with G-Cter in SUMO1) cross-link involves residue Lys-122. Residues Ser-130 and Ser-148 each carry the phosphoserine modification. Thr-170 bears the Phosphothreonine mark. Ser-175 and Ser-179 each carry phosphoserine. A Phosphothreonine modification is found at Thr-216. Residues Ser-217 and Ser-241 each carry the phosphoserine modification. Tyr-251 carries the post-translational modification Phosphotyrosine. Coiled-coil stretches lie at residues 252–280 (EHSL…SLME) and 353–377 (TNVK…SSIH).

The protein belongs to the perilipin family. In terms of assembly, homooligomer. Interacts with M6PR (via the cytoplasmic domain). Interacts with IGF2R (via the cytoplasmic domain). Post-translationally, phosphorylation at Tyr-251 by isoform 1 of CHKA (CHKalpha2) promotes dissociation from lipid droplets: dissociation is followed by recruitment of autophagosome machinery to lipid droplets and subsequent lipid droplet lipolysis.

Its subcellular location is the lipid droplet. It localises to the endosome membrane. The protein localises to the cytoplasm. Its function is as follows. Structural component of lipid droplets, which is required for the formation and maintenance of lipid storage droplets. Required for the transport of mannose 6-phosphate receptors (MPR) from endosomes to the trans-Golgi network. The polypeptide is Perilipin-3 (PLIN3) (Pongo abelii (Sumatran orangutan)).